A 554-amino-acid polypeptide reads, in one-letter code: Hydroxylamine reductase (554 aa).

[2Fe-2S] cluster-binding residues include C3, C6, C18, and C25. 8 residues coordinate hybrid [4Fe-2O-2S] cluster: H252, E276, C320, C408, C436, C461, E495, and K497. Cysteine persulfide is present on C408.

It belongs to the HCP family. It depends on [2Fe-2S] cluster as a cofactor. The cofactor is hybrid [4Fe-2O-2S] cluster.

The protein localises to the cytoplasm. The catalysed reaction is A + NH4(+) + H2O = hydroxylamine + AH2 + H(+). Catalyzes the reduction of hydroxylamine to form NH(3) and H(2)O. The protein is Hydroxylamine reductase of Shewanella baltica (strain OS155 / ATCC BAA-1091).